The chain runs to 295 residues: DegV domain-containing protein MG326 (295 aa).

The region spanning 4-292 (TAIITDSTAS…IDAFSISLLI (289 aa)) is the DegV domain. Positions 63 and 95 each coordinate hexadecanoate.

Functionally, may bind long-chain fatty acids, such as palmitate, and may play a role in lipid transport or fatty acid metabolism. The chain is DegV domain-containing protein MG326 from Mycoplasma genitalium (strain ATCC 33530 / DSM 19775 / NCTC 10195 / G37) (Mycoplasmoides genitalium).